We begin with the raw amino-acid sequence, 247 residues long: 5'-nucleotidase SurE (247 aa).

A divalent metal cation-binding residues include Asp-8, Asp-9, Ser-39, and Asn-91.

The protein belongs to the SurE nucleotidase family. It depends on a divalent metal cation as a cofactor.

It localises to the cytoplasm. The catalysed reaction is a ribonucleoside 5'-phosphate + H2O = a ribonucleoside + phosphate. Its function is as follows. Nucleotidase that shows phosphatase activity on nucleoside 5'-monophosphates. This Aromatoleum aromaticum (strain DSM 19018 / LMG 30748 / EbN1) (Azoarcus sp. (strain EbN1)) protein is 5'-nucleotidase SurE.